The following is a 63-amino-acid chain: Large ribosomal subunit protein bL32 (63 aa).

Disordered regions lie at residues 1-25 and 42-63; these read MAVP…LTTP and VSPK…QNND. The segment covering 7-20 has biased composition (basic residues); that stretch reads KTSKQKKRSRRGHI. Positions 54–63 are enriched in polar residues; sequence ANENKQQNND.

Belongs to the bacterial ribosomal protein bL32 family.

The protein is Large ribosomal subunit protein bL32 of Lactobacillus johnsonii (strain CNCM I-12250 / La1 / NCC 533).